The following is a 197-amino-acid chain: NADH-quinone oxidoreductase subunit C (197 aa).

The protein belongs to the complex I 30 kDa subunit family. As to quaternary structure, NDH-1 is composed of 14 different subunits. Subunits NuoB, C, D, E, F, and G constitute the peripheral sector of the complex.

Its subcellular location is the cell inner membrane. The catalysed reaction is a quinone + NADH + 5 H(+)(in) = a quinol + NAD(+) + 4 H(+)(out). NDH-1 shuttles electrons from NADH, via FMN and iron-sulfur (Fe-S) centers, to quinones in the respiratory chain. The immediate electron acceptor for the enzyme in this species is believed to be ubiquinone. Couples the redox reaction to proton translocation (for every two electrons transferred, four hydrogen ions are translocated across the cytoplasmic membrane), and thus conserves the redox energy in a proton gradient. In Neisseria meningitidis serogroup A / serotype 4A (strain DSM 15465 / Z2491), this protein is NADH-quinone oxidoreductase subunit C.